The following is a 264-amino-acid chain: S-adenosylmethionine decarboxylase proenzyme (264 aa).

Catalysis depends on S113, which acts as the Schiff-base intermediate with substrate; via pyruvic acid. Residue S113 is modified to Pyruvic acid (Ser); by autocatalysis. The Proton acceptor; for processing activity role is filled by H118. C141 serves as the catalytic Proton donor; for catalytic activity.

It belongs to the prokaryotic AdoMetDC family. Type 2 subfamily. Heterooctamer of four alpha and four beta chains arranged as a tetramer of alpha/beta heterodimers. The cofactor is pyruvate. In terms of processing, is synthesized initially as an inactive proenzyme. Formation of the active enzyme involves a self-maturation process in which the active site pyruvoyl group is generated from an internal serine residue via an autocatalytic post-translational modification. Two non-identical subunits are generated from the proenzyme in this reaction, and the pyruvate is formed at the N-terminus of the alpha chain, which is derived from the carboxyl end of the proenzyme. The post-translation cleavage follows an unusual pathway, termed non-hydrolytic serinolysis, in which the side chain hydroxyl group of the serine supplies its oxygen atom to form the C-terminus of the beta chain, while the remainder of the serine residue undergoes an oxidative deamination to produce ammonia and the pyruvoyl group blocking the N-terminus of the alpha chain.

The enzyme catalyses S-adenosyl-L-methionine + H(+) = S-adenosyl 3-(methylsulfanyl)propylamine + CO2. It functions in the pathway amine and polyamine biosynthesis; S-adenosylmethioninamine biosynthesis; S-adenosylmethioninamine from S-adenosyl-L-methionine: step 1/1. Catalyzes the decarboxylation of S-adenosylmethionine to S-adenosylmethioninamine (dcAdoMet), the propylamine donor required for the synthesis of the polyamines spermine and spermidine from the diamine putrescine. This is S-adenosylmethionine decarboxylase proenzyme from Xylella fastidiosa (strain 9a5c).